Consider the following 43-residue polypeptide: Protein PsbN (43 aa).

A helical membrane pass occupies residues 7–27 (LSIGIAVVVIAVTGFSIYTAF).

The protein belongs to the PsbN family.

It is found in the cellular thylakoid membrane. In terms of biological role, may play a role in photosystem I and II biogenesis. This Picosynechococcus sp. (strain ATCC 27264 / PCC 7002 / PR-6) (Agmenellum quadruplicatum) protein is Protein PsbN.